The primary structure comprises 176 residues: Small ribosomal subunit protein uS4 (176 aa).

An S4 RNA-binding domain is found at 104 to 166; that stretch reads RRLQTIVYKK…PTSPFKQNPP (63 aa).

The protein belongs to the universal ribosomal protein uS4 family. Part of the 30S ribosomal subunit. Contacts protein S5. The interaction surface between S4 and S5 is involved in control of translational fidelity.

In terms of biological role, one of the primary rRNA binding proteins, it binds directly to 16S rRNA where it nucleates assembly of the body of the 30S subunit. Functionally, with S5 and S12 plays an important role in translational accuracy. The protein is Small ribosomal subunit protein uS4 (rps4) of Sulfolobus acidocaldarius (strain ATCC 33909 / DSM 639 / JCM 8929 / NBRC 15157 / NCIMB 11770).